Consider the following 141-residue polypeptide: Large ribosomal subunit protein uL11 (141 aa).

The protein belongs to the universal ribosomal protein uL11 family. In terms of assembly, part of the ribosomal stalk of the 50S ribosomal subunit. Interacts with L10 and the large rRNA to form the base of the stalk. L10 forms an elongated spine to which L12 dimers bind in a sequential fashion forming a multimeric L10(L12)X complex. One or more lysine residues are methylated.

Functionally, forms part of the ribosomal stalk which helps the ribosome interact with GTP-bound translation factors. In Synechococcus sp. (strain JA-2-3B'a(2-13)) (Cyanobacteria bacterium Yellowstone B-Prime), this protein is Large ribosomal subunit protein uL11.